The chain runs to 35 residues: PTEN upstream open reading frame MP31 (35 aa).

In terms of assembly, interacts with lactate dehydrogenases LDHA and LDHB; interaction with mitochondrial LDH leads to inhibition of lactate dehydrogenase activity, preventing conversion of lactate to pyruvate. In terms of tissue distribution, detected in brain, kidney and liver (at protein level).

Its subcellular location is the mitochondrion. Its function is as follows. Inhibits lactate dehydrogenase (LDH)-mediated conversion of lactate to pyruvate in mitochondria by competing with mitochondrial LDH for binding to NAD(+). Also inhibits cellular lactate utilization. The chain is PTEN upstream open reading frame MP31 from Mus musculus (Mouse).